Reading from the N-terminus, the 210-residue chain is FMN-dependent NADH:quinone oxidoreductase 9 (210 aa).

FMN is bound by residues S10 and 16–18; that span reads SAS.

It belongs to the azoreductase type 1 family. As to quaternary structure, homodimer. FMN serves as cofactor.

The catalysed reaction is 2 a quinone + NADH + H(+) = 2 a 1,4-benzosemiquinone + NAD(+). The enzyme catalyses N,N-dimethyl-1,4-phenylenediamine + anthranilate + 2 NAD(+) = 2-(4-dimethylaminophenyl)diazenylbenzoate + 2 NADH + 2 H(+). Quinone reductase that provides resistance to thiol-specific stress caused by electrophilic quinones. Its function is as follows. Also exhibits azoreductase activity. Catalyzes the reductive cleavage of the azo bond in aromatic azo compounds to the corresponding amines. In Burkholderia lata (strain ATCC 17760 / DSM 23089 / LMG 22485 / NCIMB 9086 / R18194 / 383), this protein is FMN-dependent NADH:quinone oxidoreductase 9.